We begin with the raw amino-acid sequence, 403 residues long: F-box protein At1g60400 (403 aa).

The F-box domain occupies 13–59 (IDRLSALPEHLLCRILSELSTKDSVRTSVLSKHWRNLWLHVPVLELE).

In Arabidopsis thaliana (Mouse-ear cress), this protein is F-box protein At1g60400.